We begin with the raw amino-acid sequence, 128 residues long: Nanos homolog 1 (128 aa).

The essential for its translational repressor activity stretch occupies residues 7–23 (FDSWSDYLGLSSLISRG). Residues 25 to 52 (QPQREGERPRWDVLSPASAEPLPSNESV) are disordered. The segment at 56-110 (GCGFCRSNREALSLYTSHRLRALDGRVLCPVLRGYTCPLCGANGDWAHTMRYCPL) adopts a Nanos-type zinc-finger fold. Cys57, Cys60, His73, Cys84, Cys92, Cys95, His103, and Cys108 together coordinate Zn(2+). 2 short sequence motifs (C2HC) span residues 57–84 (CGFCRSNREALSLYTSHRLRALDGRVLC) and 92–108 (CPLCGANGDWAHTMRYC).

Belongs to the nanos family. As to quaternary structure, interacts with ccnb1. As to expression, ovary and testis.

It is found in the cytoplasm. The protein resides in the perinuclear region. Functionally, acts as a translational repressor. Can mediate repression affecting different steps in the translation process: cap-driven, IRES-driven, polyadenylated RNAs or nonpolyadenylated RNAs. Essential for the development of primordial germ cells (PGCs) by ensuring their proper migration and survival. This Xenopus laevis (African clawed frog) protein is Nanos homolog 1 (nanos1).